Consider the following 273-residue polypeptide: SAGA-associated factor 29 homolog B (273 aa).

Residues 128–273 enclose the SGF29 C-terminal domain; that stretch reads EAYASLKGEQ…VVALPEGHRQ (146 aa). Histone H3K4me3 N-terminus binding stretches follow at residues 171–173 and 220–223; these read DEE and GTTA. A histone H3K4me3 binding region spans residues 245–248; sequence FDDD.

Belongs to the SGF29 family. As to expression, expressed in roots, rosette leaves, cauline leaves, stems and flowers.

It is found in the nucleus. Functionally, chromatin reader component of the transcription regulatory histone acetylation (HAT) complex SAGA. The sequence is that of SAGA-associated factor 29 homolog B from Arabidopsis thaliana (Mouse-ear cress).